We begin with the raw amino-acid sequence, 263 residues long: Protein STK_14130 (263 aa).

The protein belongs to the CinA family.

In Sulfurisphaera tokodaii (strain DSM 16993 / JCM 10545 / NBRC 100140 / 7) (Sulfolobus tokodaii), this protein is Protein STK_14130.